The chain runs to 508 residues: UDP-N-acetylmuramoylalanine--D-glutamate ligase (508 aa).

Residue Gly-138 to Thr-144 coordinates ATP.

It belongs to the MurCDEF family.

The protein resides in the cytoplasm. The catalysed reaction is UDP-N-acetyl-alpha-D-muramoyl-L-alanine + D-glutamate + ATP = UDP-N-acetyl-alpha-D-muramoyl-L-alanyl-D-glutamate + ADP + phosphate + H(+). It participates in cell wall biogenesis; peptidoglycan biosynthesis. In terms of biological role, cell wall formation. Catalyzes the addition of glutamate to the nucleotide precursor UDP-N-acetylmuramoyl-L-alanine (UMA). This Bordetella avium (strain 197N) protein is UDP-N-acetylmuramoylalanine--D-glutamate ligase.